A 388-amino-acid chain; its full sequence is Xylose isomerase (388 aa).

Catalysis depends on residues His54 and Asp57. The Mg(2+) site is built by Glu181, Glu217, His220, Asp245, Asp255, Asp257, and Asp287.

It belongs to the xylose isomerase family. Homotetramer. Mg(2+) serves as cofactor.

It is found in the cytoplasm. The catalysed reaction is alpha-D-xylose = alpha-D-xylulofuranose. This is Xylose isomerase from Streptomyces corchorusii (Streptomyces chibaensis).